A 396-amino-acid polypeptide reads, in one-letter code: MELDHMTTGGLHAYPAPRGGPAAKPNVILQIGKCRAEMLEHVRRTHRHLLTEVSKQVERELKGLHRSVGKLENNLDGYVPTGDSQRWKKSIKACLCRCQETIANLERWVKREMHVWREVFYRLERWADRLESMGGKYPVGSEPARHTVSVGVGGPEPYCQEADGYDYTVSPYAITPPPAAGELPEQESVEAQQYQSWGPGEDGQPSPGVDTQIFEDPREFLSHLEEYLRQVGGSEEYWLSQIQNHMNGPAKKWWEFKQGSVKNWVEFKKEFLQYSEGTLSREAIQRELELPQKQGEPLDQFLWRKRDLYQTLYVDAEEEEIIQYVVGTLQPKLKRFLRHPLPKTLEQLIQRGMEVQDGLEQAAEPSGTPLPTEDETEALTPALTSESVASDRTQPE.

The stretch at 54 to 78 forms a coiled coil; that stretch reads SKQVERELKGLHRSVGKLENNLDGY. Residues 89 to 100 are interaction with SH3GL1 or SH3GL3; it reads KSIKACLCRCQE. The interval 177-207 is disordered; it reads PPAAGELPEQESVEAQQYQSWGPGEDGQPSP. The tract at residues 195 to 214 is interaction with DNM2; that stretch reads QSWGPGEDGQPSPGVDTQIF. The residue at position 260 (serine 260) is a Phosphoserine; by CaMK2. Glycyl lysine isopeptide (Lys-Gly) (interchain with G-Cter in ubiquitin) cross-links involve residues lysine 268 and lysine 269. Threonine 278 is modified (phosphothreonine). The tract at residues 356 to 396 is disordered; sequence QDGLEQAAEPSGTPLPTEDETEALTPALTSESVASDRTQPE. Polar residues predominate over residues 382-396; sequence ALTSESVASDRTQPE.

Belongs to the ARC/ARG3.1 family. Homooligomer; homooligomerizes into virion-like capsids. Interacts with SH3GL1/endophilin-2, SH3GL3/endophilin-3 and DNM2/DYN2. Interacts with CAMK2B (in the kinase inactive state); leading to target ARC to inactive synapses. Interacts with PSEN1. Interacts with GRIN2A and GRIN2B; inhibiting homooligomerization. Ubiquitinated by UBE3A, leading to its degradation by the proteasome, thereby promoting AMPA receptors (AMPARs) expression at synapses. Ubiquitinated by RNF216 at Lys-268 and Lys-269 limiting ARC protein levels induced by synaptic activity and thus regulating ARC-dependent forms of synaptic plasticity. In terms of processing, palmitoylation anchors the protein into the membrane by allowing direct insertion into the hydrophobic core of the lipid bilayer. Post-translationally, phosphorylation at Ser-260 by CaMK2 prevents homooligomerization into virion-like capsids by disrupting an interaction surface essential for high-order oligomerization. Phosphorylation by CaMK2 inhibits synaptic activity. In terms of tissue distribution, expressed in brain and testis. In primary visual cortex, detected in all cortical layers with the exception of layer 5: present at highest level in layers 2/3 and 4, the predominant sites of ocular dominance plasticity (at protein level). Also expressed in skin-migratory dendritic cells.

The protein localises to the extracellular vesicle membrane. It is found in the postsynaptic cell membrane. The protein resides in the synapse. Its subcellular location is the postsynaptic density. It localises to the early endosome membrane. The protein localises to the cell projection. It is found in the dendrite. The protein resides in the cytoplasm. Its subcellular location is the cytoskeleton. It localises to the cell cortex. The protein localises to the dendritic spine. It is found in the cytoplasmic vesicle. The protein resides in the secretory vesicle. Its subcellular location is the acrosome. It localises to the clathrin-coated vesicle membrane. Its function is as follows. Master regulator of synaptic plasticity that self-assembles into virion-like capsids that encapsulate RNAs and mediate intercellular RNA transfer in the nervous system. ARC protein is released from neurons in extracellular vesicles that mediate the transfer of ARC mRNA into new target cells, where ARC mRNA can undergo activity-dependent translation. ARC capsids are endocytosed and are able to transfer ARC mRNA into the cytoplasm of neurons. Acts as a key regulator of synaptic plasticity: required for protein synthesis-dependent forms of long-term potentiation (LTP) and depression (LTD) and for the formation of long-term memory. Regulates synaptic plasticity by promoting endocytosis of AMPA receptors (AMPARs) in response to synaptic activity: this endocytic pathway maintains levels of surface AMPARs in response to chronic changes in neuronal activity through synaptic scaling, thereby contributing to neuronal homeostasis. Acts as a postsynaptic mediator of activity-dependent synapse elimination in the developing cerebellum by mediating elimination of surplus climbing fiber synapses. Accumulates at weaker synapses, probably to prevent their undesired enhancement. This suggests that ARC-containing virion-like capsids may be required to eliminate synaptic material. Required to transduce experience into long-lasting changes in visual cortex plasticity and for long-term memory. Involved in postsynaptic trafficking and processing of amyloid-beta A4 (APP) via interaction with PSEN1. In addition to its role in synapses, also involved in the regulation of the immune system: specifically expressed in skin-migratory dendritic cells and regulates fast dendritic cell migration, thereby regulating T-cell activation. This is Activity-regulated cytoskeleton-associated protein from Mus musculus (Mouse).